The primary structure comprises 274 residues: Diaminopimelate epimerase (274 aa).

3 residues coordinate substrate: N11, Q44, and N64. C73 functions as the Proton donor in the catalytic mechanism. Residues 74–75, N157, N190, and 208–209 each bind substrate; these read GN and ER. C217 (proton acceptor) is an active-site residue. 218 to 219 is a substrate binding site; the sequence is GS.

This sequence belongs to the diaminopimelate epimerase family. Homodimer.

Its subcellular location is the cytoplasm. The enzyme catalyses (2S,6S)-2,6-diaminopimelate = meso-2,6-diaminopimelate. It participates in amino-acid biosynthesis; L-lysine biosynthesis via DAP pathway; DL-2,6-diaminopimelate from LL-2,6-diaminopimelate: step 1/1. In terms of biological role, catalyzes the stereoinversion of LL-2,6-diaminopimelate (L,L-DAP) to meso-diaminopimelate (meso-DAP), a precursor of L-lysine and an essential component of the bacterial peptidoglycan. The polypeptide is Diaminopimelate epimerase (Escherichia coli O81 (strain ED1a)).